Here is a 153-residue protein sequence, read N- to C-terminus: UPF0178 protein Atu1478 (153 aa).

This sequence belongs to the UPF0178 family.

This chain is UPF0178 protein Atu1478, found in Agrobacterium fabrum (strain C58 / ATCC 33970) (Agrobacterium tumefaciens (strain C58)).